Here is a 300-residue protein sequence, read N- to C-terminus: Mitochondrial tricarboxylate transporter 1 (300 aa).

Solcar repeat units follow at residues 8–98, 107–197, and 209–294; these read VSPS…FRSM, LSNS…LRDW, and INWL…VVWL. 6 helical membrane-spanning segments follow: residues 11-31, 67-87, 114-134, 172-191, 208-228, and 277-297; these read SVSV…TFPI, PKGL…KAGV, LAGM…SETI, GVVP…LGTY, LINW…AVYG, and LIVS…LLAG.

Belongs to the mitochondrial carrier (TC 2.A.29) family.

The protein resides in the mitochondrion membrane. Mitochondrial tricarboxylate transporter; part of the gene cluster that mediates the biosynthesis of itaconic acid and 2-hydroxyparaconate. Cis-aconitate is secreted by the mitochondrial tricarboxylate transporter MTT1. In the cytosol cis-aconitate is converted into trans-aconitate via isomerization by the aconitate-delta-isomerase ADI1. Decarboxylation of trans-aconitate by the trans-aconitate decarboxylase TAD1 then leads then to the production of itaconic acid. The cytochrome P450 monooxygenase CYP3 further converts itaconate to 2-hydroxyparaconate via oxidation of the double bond, leading to a transient epoxide, which can subsequently be lactonized to produce 2-hydroxyparaconate. Secretion of itaconate and possibly 2-hydroxyparaconate into the medium is mediated by the major facilitator ITP1. The glyoxalase domain-containing protein RDO1 is not involved in the biosynthesis of itaconate and 2-hydroxyparaconate, however, it might play a role in the further conversion of 2-hydroxyparaconate to itatartarate. This is Mitochondrial tricarboxylate transporter 1 from Mycosarcoma maydis (Corn smut fungus).